Consider the following 395-residue polypeptide: Probable inactive serine/threonine-protein kinase DDB_G0293746 (395 aa).

The Protein kinase domain maps to 9–395; sequence YSEIDLISDN…ITQFIIDYLF (387 aa). ATP is bound by residues 15 to 23 and K54; that span reads ISDNPFKNY. Residues 213–266 form a disordered region; the sequence is NSSLSSLSSSTSSSSSSSSSTNCNNNTTENNNNNYNNNNNNNNNNNNNNNNNSL.

It belongs to the protein kinase superfamily. Ser/Thr protein kinase family.

The polypeptide is Probable inactive serine/threonine-protein kinase DDB_G0293746 (Dictyostelium discoideum (Social amoeba)).